The sequence spans 911 residues: Isoleucine--tRNA ligase (911 aa).

A 'HIGH' region motif is present at residues 57–67; it reads PYANGDIHMGH. Glu551 lines the L-isoleucyl-5'-AMP pocket. The 'KMSKS' region signature appears at 592–596; the sequence is KMSKS. ATP is bound at residue Lys595. 4 residues coordinate Zn(2+): Cys881, Cys884, Cys901, and Cys904.

The protein belongs to the class-I aminoacyl-tRNA synthetase family. IleS type 1 subfamily. Monomer. Zn(2+) serves as cofactor.

Its subcellular location is the cytoplasm. The catalysed reaction is tRNA(Ile) + L-isoleucine + ATP = L-isoleucyl-tRNA(Ile) + AMP + diphosphate. In terms of biological role, catalyzes the attachment of isoleucine to tRNA(Ile). As IleRS can inadvertently accommodate and process structurally similar amino acids such as valine, to avoid such errors it has two additional distinct tRNA(Ile)-dependent editing activities. One activity is designated as 'pretransfer' editing and involves the hydrolysis of activated Val-AMP. The other activity is designated 'posttransfer' editing and involves deacylation of mischarged Val-tRNA(Ile). The protein is Isoleucine--tRNA ligase of Exiguobacterium sibiricum (strain DSM 17290 / CCUG 55495 / CIP 109462 / JCM 13490 / 255-15).